The chain runs to 393 residues: Protein TsgA (393 aa).

12 consecutive transmembrane segments (helical) span residues 11–31 (WISFLSYALTGALVIVTGMVM), 51–71 (FLNAGILISIFLNAWLMEIVP), 78–98 (FGFILMVLAVAGLMFSHSLAL), 101–121 (AAMFVLGLVSGITMSIGTFLI), 134–154 (LLFTDSFFSMAGMIFPMVAAF), 162–182 (WYWVYACIGLVYLAIFILTFG), 206–226 (IGVLFLAVAALCYILGQLGFI), 245–265 (ALVSDFWMSYMFGMWAFSFIL), 273–293 (ILTVLAGMAAVLMYLFITGTQ), 298–318 (WFILTLGFFSSAIYTSIITLG), 332–352 (FILTCGTIGTMLTFVVTGPIV), and 361–381 (LLTANGLYAVVFVMCFALGFV).

It belongs to the major facilitator superfamily. TsgA family.

It is found in the cell inner membrane. This is Protein TsgA from Salmonella dublin (strain CT_02021853).